Reading from the N-terminus, the 505-residue chain is TBC1 domain family member 22B (505 aa).

Ala2 is modified (N-acetylalanine). Residues Ser58 and Ser116 each carry the phosphoserine modification. Residues 105–146 (SKLRVKPERSQSTTSDVPANYKVIKSSSDAQLSRNSSDTCLR) are disordered. Residues 129–146 (KSSSDAQLSRNSSDTCLR) are compositionally biased toward polar residues. The residue at position 154 (Ser154) is a Phosphoserine. A Rab-GAP TBC domain is found at 210-434 (GVPREVRPIT…RLWDTYQSEP (225 aa)).

As to quaternary structure, interacts with ACBD3 and ARFGEF1. Interacts with YWHAB, YWHAE, YWHAG, YWHAH, YWHAQ and YWHAZ.

In terms of biological role, may act as a GTPase-activating protein for Rab family protein(s). This chain is TBC1 domain family member 22B (TBC1D22B), found in Homo sapiens (Human).